The sequence spans 154 residues: Avirulence protein ATR13 (154 aa).

The first 19 residues, 1-19 (MRLVHAVLLPGIIVFVSNG), serve as a signal peptide directing secretion. A RxLR motif is present at residues 38-41 (RQLR). The tract at residues 50 to 92 (LSRASFGLGKAQDPLDKFFSKIIFSGKPIETSYSAKGIHEKII) is leucine heptad repeat region. A single repeat region region spans residues 93–103 (EAHDLHVSKSK). The tract at residues 104 to 154 (NAPIQYASVMEYLKKTYPGPDIERIVSTLERHDEVGAKDLGAKLRDALDRQ) is highly variable C-terminus domain.

It belongs to the RxLR effector family.

It localises to the secreted. The protein resides in the host cytoplasm. Its function is as follows. Secreted effector that acts as an elicitor of hypersensitive response (HR) specifically on plants carrying defense protein RPP13. Recognition of ATR13 by RPP13 initiates defense responses that are effective against oomycete, bacterial and viral pathogens. The allele ATR13-Emco5 recognizes RPP13-Nd, the RPP13 defense protein from Arabidopsis thaliana ecotype Niederzenz. The protein is Avirulence protein ATR13 of Hyaloperonospora arabidopsidis (Peronospora arabidopsidis).